An 841-amino-acid polypeptide reads, in one-letter code: Protein translocase subunit SecA (841 aa).

ATP is bound by residues Q87, G105–T109, and D494. Residues C825, C827, C836, and C837 each coordinate Zn(2+).

The protein belongs to the SecA family. As to quaternary structure, monomer and homodimer. Part of the essential Sec protein translocation apparatus which comprises SecA, SecYEG and auxiliary proteins SecDF-YajC and YidC. The cofactor is Zn(2+).

The protein resides in the cell inner membrane. It localises to the cytoplasm. It catalyses the reaction ATP + H2O + cellular proteinSide 1 = ADP + phosphate + cellular proteinSide 2.. Part of the Sec protein translocase complex. Interacts with the SecYEG preprotein conducting channel. Has a central role in coupling the hydrolysis of ATP to the transfer of proteins into and across the cell membrane, serving as an ATP-driven molecular motor driving the stepwise translocation of polypeptide chains across the membrane. This is Protein translocase subunit SecA from Syntrophus aciditrophicus (strain SB).